Consider the following 571-residue polypeptide: Chaperonin GroEL 1 (571 aa).

ATP contacts are provided by residues T29–P32, K50, D86–T90, G416, and D498.

The protein belongs to the chaperonin (HSP60) family. Forms a cylinder of 14 subunits composed of two heptameric rings stacked back-to-back. Interacts with the co-chaperonin GroES.

Its subcellular location is the cytoplasm. It carries out the reaction ATP + H2O + a folded polypeptide = ADP + phosphate + an unfolded polypeptide.. Together with its co-chaperonin GroES, plays an essential role in assisting protein folding. The GroEL-GroES system forms a nano-cage that allows encapsulation of the non-native substrate proteins and provides a physical environment optimized to promote and accelerate protein folding. The chain is Chaperonin GroEL 1 from Rhodopirellula baltica (strain DSM 10527 / NCIMB 13988 / SH1).